A 282-amino-acid polypeptide reads, in one-letter code: 2-dehydro-3-deoxyphosphooctonate aldolase (282 aa).

This sequence belongs to the KdsA family.

The protein resides in the cytoplasm. It catalyses the reaction D-arabinose 5-phosphate + phosphoenolpyruvate + H2O = 3-deoxy-alpha-D-manno-2-octulosonate-8-phosphate + phosphate. It participates in carbohydrate biosynthesis; 3-deoxy-D-manno-octulosonate biosynthesis; 3-deoxy-D-manno-octulosonate from D-ribulose 5-phosphate: step 2/3. The protein operates within bacterial outer membrane biogenesis; lipopolysaccharide biosynthesis. The protein is 2-dehydro-3-deoxyphosphooctonate aldolase of Shewanella oneidensis (strain ATCC 700550 / JCM 31522 / CIP 106686 / LMG 19005 / NCIMB 14063 / MR-1).